A 362-amino-acid polypeptide reads, in one-letter code: DNA replication and repair protein RecF (362 aa).

31-38 lines the ATP pocket; sequence GDNAAGKT.

This sequence belongs to the RecF family.

It localises to the cytoplasm. In terms of biological role, the RecF protein is involved in DNA metabolism; it is required for DNA replication and normal SOS inducibility. RecF binds preferentially to single-stranded, linear DNA. It also seems to bind ATP. The polypeptide is DNA replication and repair protein RecF (Hydrogenovibrio crunogenus (strain DSM 25203 / XCL-2) (Thiomicrospira crunogena)).